Consider the following 425-residue polypeptide: tRNA(Ile)-lysidine synthase (425 aa).

27–32 is an ATP binding site; the sequence is SGGLDS.

This sequence belongs to the tRNA(Ile)-lysidine synthase family.

It localises to the cytoplasm. The enzyme catalyses cytidine(34) in tRNA(Ile2) + L-lysine + ATP = lysidine(34) in tRNA(Ile2) + AMP + diphosphate + H(+). Its function is as follows. Ligates lysine onto the cytidine present at position 34 of the AUA codon-specific tRNA(Ile) that contains the anticodon CAU, in an ATP-dependent manner. Cytidine is converted to lysidine, thus changing the amino acid specificity of the tRNA from methionine to isoleucine. The protein is tRNA(Ile)-lysidine synthase of Streptococcus pneumoniae (strain P1031).